We begin with the raw amino-acid sequence, 180 residues long: Large ribosomal subunit protein uL5 (180 aa).

This sequence belongs to the universal ribosomal protein uL5 family. Part of the 50S ribosomal subunit; part of the 5S rRNA/L5/L18/L25 subcomplex. Contacts the 5S rRNA and the P site tRNA. Forms a bridge to the 30S subunit in the 70S ribosome.

This is one of the proteins that bind and probably mediate the attachment of the 5S RNA into the large ribosomal subunit, where it forms part of the central protuberance. In the 70S ribosome it contacts protein S13 of the 30S subunit (bridge B1b), connecting the 2 subunits; this bridge is implicated in subunit movement. Contacts the P site tRNA; the 5S rRNA and some of its associated proteins might help stabilize positioning of ribosome-bound tRNAs. This chain is Large ribosomal subunit protein uL5, found in Chlamydia caviae (strain ATCC VR-813 / DSM 19441 / 03DC25 / GPIC) (Chlamydophila caviae).